A 476-amino-acid chain; its full sequence is Stromelysin-2 (476 aa).

The first 17 residues, 1-17 (MEPLAILALLSLPICSA), serve as a signal peptide directing secretion. Positions 18-99 (YPLHGAVTQG…PRCGVPDVGG (82 aa)) are cleaved as a propeptide — activation peptide. The short motif at 90–97 (PRCGVPDV) is the Cysteine switch element. Zn(2+) contacts are provided by Cys-92, His-168, Asp-170, His-183, His-196, and His-218. The active site involves Glu-219. Residues His-222 and His-228 each coordinate Zn(2+). Hemopexin repeat units follow at residues 286–335 (PDKC…WPTL), 336–382 (PSDL…GFPP), 384–432 (VKKI…FPGI), and 433–476 (EPQV…WLLC). Cysteines 289 and 476 form a disulfide.

Belongs to the peptidase M10A family. Requires Zn(2+) as cofactor. Ca(2+) is required as a cofactor. Expressed in small intestine. Weak levels in heart and lung.

It is found in the secreted. It localises to the extracellular space. The protein resides in the extracellular matrix. The catalysed reaction is Similar to stromelysin 1, but action on collagen types III, IV and V is weak.. In terms of biological role, can degrade fibronectin, gelatins of type I, III, IV, and V; weakly collagens III, IV, and V. Activates procollagenase. The polypeptide is Stromelysin-2 (Mmp10) (Mus musculus (Mouse)).